The sequence spans 191 residues: Protein GrpE (191 aa).

Basic and acidic residues predominate over residues 1–10 (MNHEEQKVET). The interval 1–28 (MNHEEQKVETMEQVEAQPVEPTDVDSEV) is disordered.

Belongs to the GrpE family. As to quaternary structure, homodimer.

The protein localises to the cytoplasm. In terms of biological role, participates actively in the response to hyperosmotic and heat shock by preventing the aggregation of stress-denatured proteins, in association with DnaK and GrpE. It is the nucleotide exchange factor for DnaK and may function as a thermosensor. Unfolded proteins bind initially to DnaJ; upon interaction with the DnaJ-bound protein, DnaK hydrolyzes its bound ATP, resulting in the formation of a stable complex. GrpE releases ADP from DnaK; ATP binding to DnaK triggers the release of the substrate protein, thus completing the reaction cycle. Several rounds of ATP-dependent interactions between DnaJ, DnaK and GrpE are required for fully efficient folding. The polypeptide is Protein GrpE (Aeromonas salmonicida (strain A449)).